A 119-amino-acid polypeptide reads, in one-letter code: Large ribosomal subunit protein bL20c (119 aa).

Belongs to the bacterial ribosomal protein bL20 family.

It is found in the plastid. It localises to the chloroplast. Binds directly to 23S ribosomal RNA and is necessary for the in vitro assembly process of the 50S ribosomal subunit. It is not involved in the protein synthesizing functions of that subunit. This chain is Large ribosomal subunit protein bL20c, found in Oedogonium cardiacum (Filamentous green alga).